Here is a 455-residue protein sequence, read N- to C-terminus: Rho GTPase-activating protein 3 (455 aa).

Positions 1 to 12 (MTNFSRSKSTGT) are enriched in polar residues. The disordered stretch occupies residues 1 to 68 (MTNFSRSKST…HASRSGNGSG (68 aa)). Basic and acidic residues predominate over residues 24 to 33 (GPDKYENIHN). Over residues 43-54 (STTSTDYYDAST) the composition is skewed to low complexity. Positions 55–64 (PLSSHASRSG) are enriched in polar residues. In terms of domain architecture, CRIB spans 105–118 (IGWPTEVKHVSHVT). One can recognise a Rho-GAP domain in the interval 153–331 (KSMQCSYDDR…LILMNLKERE (179 aa)). Disordered stretches follow at residues 342 to 366 (KQTSDPSEEWESQHSEILSPEKPNN) and 432 to 455 (FVSNRDEGRKGREAWSSRLSSLPW). Residues 435 to 446 (NRDEGRKGREAW) show a composition bias toward basic and acidic residues.

Expressed in differentiating xylem cells.

Its subcellular location is the cell membrane. Functionally, acts as a GTPase activator for the Rac-type GTPase by converting it to an inactive GDP-bound state. Involved in secondary wall pattern formation. In association with ROPGEF4, mediates local activation of ARAC10/ROP11 to initiate the distinct pattern of secondary cell walls in xylem cells. The protein is Rho GTPase-activating protein 3 (ROPGAP3) of Arabidopsis thaliana (Mouse-ear cress).